The chain runs to 212 residues: CRIB domain-containing protein RIC6 (212 aa).

Residues 34 to 47 (IGNPTDVKHVAHIG) enclose the CRIB domain. The disordered stretch occupies residues 51-212 (PSANATAPSW…MPQFDNRDDF (162 aa)). A compositionally biased stretch (polar residues) spans 53–65 (ANATAPSWMTEFN). Residues 106–121 (AASEKGSPTKDKSSDK) show a composition bias toward basic and acidic residues. Positions 192–202 (EYMSETGSVRS) are enriched in polar residues.

Interacts with ARAC11/ROP1. Expressed in flowers and pollen.

The protein localises to the cell membrane. Its function is as follows. Functions as a downstream effector of Rho-related GTP binding proteins of the 'Rho of Plants' (ROPs) family. Participates in the propagation of ROP GTPase signals in specific cellular responses. Is involved in pollen tube growth regulation through its interaction with ARAC11/ROP1. In Arabidopsis thaliana (Mouse-ear cress), this protein is CRIB domain-containing protein RIC6 (RIC6).